A 226-amino-acid chain; its full sequence is ATP-dependent dethiobiotin synthetase BioD (226 aa).

ATP is bound at residue 12-17 (GVGKTV). Residue Thr16 participates in Mg(2+) binding. Lys37 is an active-site residue. Thr41 contacts substrate. ATP is bound by residues Asp49, 108-111 (EGAG), 169-170 (GS), and 197-199 (PAG). Asp49 and Glu108 together coordinate Mg(2+).

Belongs to the dethiobiotin synthetase family. Homodimer. It depends on Mg(2+) as a cofactor.

Its subcellular location is the cytoplasm. The enzyme catalyses (7R,8S)-7,8-diammoniononanoate + CO2 + ATP = (4R,5S)-dethiobiotin + ADP + phosphate + 3 H(+). Its pathway is cofactor biosynthesis; biotin biosynthesis; biotin from 7,8-diaminononanoate: step 1/2. Functionally, catalyzes a mechanistically unusual reaction, the ATP-dependent insertion of CO2 between the N7 and N8 nitrogen atoms of 7,8-diaminopelargonic acid (DAPA, also called 7,8-diammoniononanoate) to form a ureido ring. The polypeptide is ATP-dependent dethiobiotin synthetase BioD (Mycobacterium leprae (strain Br4923)).